The chain runs to 398 residues: 1-deoxy-D-xylulose 5-phosphate reductoisomerase (398 aa).

T11, G12, S13, I14, R38, N39, and N125 together coordinate NADPH. Residue K126 coordinates 1-deoxy-D-xylulose 5-phosphate. E127 contacts NADPH. D151 provides a ligand contact to Mn(2+). The 1-deoxy-D-xylulose 5-phosphate site is built by S152, E153, S179, and H202. E153 provides a ligand contact to Mn(2+). Position 208 (G208) interacts with NADPH. Positions 215, 220, 221, and 224 each coordinate 1-deoxy-D-xylulose 5-phosphate. E224 lines the Mn(2+) pocket.

It belongs to the DXR family. Mg(2+) is required as a cofactor. Requires Mn(2+) as cofactor.

It carries out the reaction 2-C-methyl-D-erythritol 4-phosphate + NADP(+) = 1-deoxy-D-xylulose 5-phosphate + NADPH + H(+). It participates in isoprenoid biosynthesis; isopentenyl diphosphate biosynthesis via DXP pathway; isopentenyl diphosphate from 1-deoxy-D-xylulose 5-phosphate: step 1/6. In terms of biological role, catalyzes the NADPH-dependent rearrangement and reduction of 1-deoxy-D-xylulose-5-phosphate (DXP) to 2-C-methyl-D-erythritol 4-phosphate (MEP). The chain is 1-deoxy-D-xylulose 5-phosphate reductoisomerase from Burkholderia mallei (strain NCTC 10247).